The following is a 298-amino-acid chain: Adaptation to cold protein C (298 aa).

Interacts with the C-terminal extension of AtcJ. Also interacts with AtcB, but not with AtcA.

Interaction with AtcJ stabilizes AtcC. Involved in cold adaptation. This chain is Adaptation to cold protein C, found in Shewanella oneidensis (strain ATCC 700550 / JCM 31522 / CIP 106686 / LMG 19005 / NCIMB 14063 / MR-1).